Reading from the N-terminus, the 521-residue chain is Probable rhamnogalacturonase B (521 aa).

An N-terminal signal peptide occupies residues 1 to 21 (MRLHAFTLLSLLGLVPSFAAA). C42 and C68 are disulfide-bonded. The N-linked (GlcNAc...) asparagine glycan is linked to N145. D219 serves as the catalytic Proton donor. Residues C221 and C238 are joined by a disulfide bond. N239 is a glycosylation site (N-linked (GlcNAc...) asparagine). H294 is an active-site residue. N321 carries N-linked (GlcNAc...) asparagine glycosylation. 2 cysteine pairs are disulfide-bonded: C344–C350 and C372–C381. The tract at residues 462–521 (ETPAAASRSEQVVQGAPQETGQSAPESAGPVPSGNPGPVPTGGSRPSRHRHGHHHFGSAI) is disordered. The span at 469 to 486 (RSEQVVQGAPQETGQSAP) shows a compositional bias: polar residues. Over residues 507-521 (PSRHRHGHHHFGSAI) the composition is skewed to basic residues.

The protein belongs to the glycosyl hydrolase 28 family.

The protein resides in the secreted. The enzyme catalyses Endohydrolysis of alpha-D-GalA-(1-&gt;2)-alpha-L-Rha glycosidic bond in the rhamnogalacturonan I backbone with initial inversion of anomeric configuration releasing oligosaccharides with beta-D-GalA at the reducing end.. Pectinolytic enzymes consist of four classes of enzymes: pectine lyase, polygalacturonase, pectin methylesterase and rhamnogalacturonase. Hydrolyzes alpha-D-galacturonopyranosyl-(1,2)-alpha-L-rhamnopyranosyl linkages in the backbone of the hairy regions of pectins. This chain is Probable rhamnogalacturonase B (rhgB), found in Aspergillus fumigatus (strain ATCC MYA-4609 / CBS 101355 / FGSC A1100 / Af293) (Neosartorya fumigata).